A 205-amino-acid chain; its full sequence is MNSHHFLVGLTGGIGSGKSAAADRLAELGAAVIDTDLIAHALTAPGGAAIEPIRAAFGDAVITVDGALDRKAMRDLAFSDPQARRQLEAIIHPAIRAESDRQIREARGPYAVLVVPLLIESNAYRDRYDRICVVDCPVDVQIARVMTRSHLPEDQVRAIIAVQSSREEKLAAADDVIDNSGDLASLYAQVDRLHARYLAAARATG.

Residues 7–204 (LVGLTGGIGS…ARYLAAARAT (198 aa)) enclose the DPCK domain. 15–20 (GSGKSA) provides a ligand contact to ATP.

Belongs to the CoaE family.

Its subcellular location is the cytoplasm. It carries out the reaction 3'-dephospho-CoA + ATP = ADP + CoA + H(+). It participates in cofactor biosynthesis; coenzyme A biosynthesis; CoA from (R)-pantothenate: step 5/5. Catalyzes the phosphorylation of the 3'-hydroxyl group of dephosphocoenzyme A to form coenzyme A. This Aromatoleum aromaticum (strain DSM 19018 / LMG 30748 / EbN1) (Azoarcus sp. (strain EbN1)) protein is Dephospho-CoA kinase.